The primary structure comprises 444 residues: RING finger and transmembrane domain-containing protein 2 (444 aa).

Topologically, residues Met-1–His-181 are extracellular. Disordered regions lie at residues Met-13–Asp-41 and Pro-92–Pro-149. Basic residues predominate over residues Tyr-107 to His-121. Positions Gly-131–Glu-140 are enriched in basic and acidic residues. The helical transmembrane segment at Lys-182–Leu-202 threads the bilayer. Over Arg-203–Val-214 the chain is Cytoplasmic. A helical membrane pass occupies residues Leu-215–Phe-235. Topologically, residues Ser-236 to Asp-255 are extracellular. A helical membrane pass occupies residues Phe-256 to Ala-276. The Cytoplasmic portion of the chain corresponds to Leu-277–Ser-329. The helical transmembrane segment at Tyr-330 to Gly-350 threads the bilayer. Over Arg-351 to Tyr-444 the chain is Extracellular. The segment at Cys-384–Arg-422 adopts an RING-type; degenerate zinc-finger fold.

The protein resides in the membrane. E3 ubiquitin-protein ligase that negatively regulates IL3-dependent cellular responses through IL3RA ubiquitination and degradation by the proteasome, having an anti-inflammatory effect. The polypeptide is RING finger and transmembrane domain-containing protein 2 (RNFT2) (Pongo abelii (Sumatran orangutan)).